A 121-amino-acid chain; its full sequence is Small ribosomal subunit protein uS13 (121 aa).

Residues 92 to 121 form a disordered region; it reads HKAGLPVRGQKTHSNARTRKGPRLTKIKKR. A compositionally biased stretch (basic residues) spans 101 to 121; the sequence is QKTHSNARTRKGPRLTKIKKR.

The protein belongs to the universal ribosomal protein uS13 family. Part of the 30S ribosomal subunit. Forms a loose heterodimer with protein S19. Forms two bridges to the 50S subunit in the 70S ribosome.

Functionally, located at the top of the head of the 30S subunit, it contacts several helices of the 16S rRNA. In the 70S ribosome it contacts the 23S rRNA (bridge B1a) and protein L5 of the 50S subunit (bridge B1b), connecting the 2 subunits; these bridges are implicated in subunit movement. Contacts the tRNAs in the A and P-sites. The sequence is that of Small ribosomal subunit protein uS13 from Petrotoga mobilis (strain DSM 10674 / SJ95).